The chain runs to 55 residues: Large ribosomal subunit protein bL33 (55 aa).

The protein belongs to the bacterial ribosomal protein bL33 family.

This chain is Large ribosomal subunit protein bL33, found in Rhizorhabdus wittichii (strain DSM 6014 / CCUG 31198 / JCM 15750 / NBRC 105917 / EY 4224 / RW1) (Sphingomonas wittichii).